We begin with the raw amino-acid sequence, 294 residues long: 4-hydroxy-tetrahydrodipicolinate synthase (294 aa).

A pyruvate-binding site is contributed by threonine 45. Tyrosine 133 functions as the Proton donor/acceptor in the catalytic mechanism. Catalysis depends on lysine 161, which acts as the Schiff-base intermediate with substrate. Isoleucine 203 is a binding site for pyruvate.

This sequence belongs to the DapA family. Homotetramer; dimer of dimers.

The protein localises to the cytoplasm. The enzyme catalyses L-aspartate 4-semialdehyde + pyruvate = (2S,4S)-4-hydroxy-2,3,4,5-tetrahydrodipicolinate + H2O + H(+). The protein operates within amino-acid biosynthesis; L-lysine biosynthesis via DAP pathway; (S)-tetrahydrodipicolinate from L-aspartate: step 3/4. In terms of biological role, catalyzes the condensation of (S)-aspartate-beta-semialdehyde [(S)-ASA] and pyruvate to 4-hydroxy-tetrahydrodipicolinate (HTPA). The chain is 4-hydroxy-tetrahydrodipicolinate synthase from Buchnera aphidicola subsp. Acyrthosiphon pisum (strain APS) (Acyrthosiphon pisum symbiotic bacterium).